Reading from the N-terminus, the 395-residue chain is Acetate kinase (395 aa).

Asn-8 is a Mg(2+) binding site. Position 15 (Lys-15) interacts with ATP. Position 89 (Arg-89) interacts with substrate. The active-site Proton donor/acceptor is Asp-146. ATP is bound by residues 206–210 (HLGNG), 281–283 (DLR), and 329–333 (GIGEN). Glu-382 provides a ligand contact to Mg(2+).

This sequence belongs to the acetokinase family. As to quaternary structure, homodimer. Mg(2+) is required as a cofactor. Mn(2+) serves as cofactor.

The protein resides in the cytoplasm. The catalysed reaction is acetate + ATP = acetyl phosphate + ADP. The protein operates within metabolic intermediate biosynthesis; acetyl-CoA biosynthesis; acetyl-CoA from acetate: step 1/2. In terms of biological role, catalyzes the formation of acetyl phosphate from acetate and ATP. Can also catalyze the reverse reaction. The protein is Acetate kinase of Bacillus velezensis (strain DSM 23117 / BGSC 10A6 / LMG 26770 / FZB42) (Bacillus amyloliquefaciens subsp. plantarum).